We begin with the raw amino-acid sequence, 159 residues long: SsrA-binding protein (159 aa).

It belongs to the SmpB family.

The protein localises to the cytoplasm. Required for rescue of stalled ribosomes mediated by trans-translation. Binds to transfer-messenger RNA (tmRNA), required for stable association of tmRNA with ribosomes. tmRNA and SmpB together mimic tRNA shape, replacing the anticodon stem-loop with SmpB. tmRNA is encoded by the ssrA gene; the 2 termini fold to resemble tRNA(Ala) and it encodes a 'tag peptide', a short internal open reading frame. During trans-translation Ala-aminoacylated tmRNA acts like a tRNA, entering the A-site of stalled ribosomes, displacing the stalled mRNA. The ribosome then switches to translate the ORF on the tmRNA; the nascent peptide is terminated with the 'tag peptide' encoded by the tmRNA and targeted for degradation. The ribosome is freed to recommence translation, which seems to be the essential function of trans-translation. In Idiomarina loihiensis (strain ATCC BAA-735 / DSM 15497 / L2-TR), this protein is SsrA-binding protein.